Here is a 258-residue protein sequence, read N- to C-terminus: Homeobox protein VENTX (258 aa).

The segment covering 1–32 (MRLSSSPPRGPQQLSSFGSVDWLSQSSCSGPT) has biased composition (polar residues). Disordered regions lie at residues 1 to 93 (MRLS…RAPR) and 227 to 248 (SHPP…PRGL). Positions 91-150 (APRVRTAFTMEQVRTLEGVFQHHQYLSPLERKRLAREMQLSEVQIKTWFQNRRMKHKRQM) form a DNA-binding region, homeobox.

In terms of tissue distribution, expressed in bone marrow of patients recovering from chemotherapy. Also expressed in an erythroleukemia cell line.

The protein resides in the nucleus. In terms of biological role, may be involved in ventralization. This chain is Homeobox protein VENTX (VENTX), found in Homo sapiens (Human).